A 117-amino-acid polypeptide reads, in one-letter code: Large ribosomal subunit protein uL18 (117 aa).

This sequence belongs to the universal ribosomal protein uL18 family. In terms of assembly, part of the 50S ribosomal subunit; part of the 5S rRNA/L5/L18/L25 subcomplex. Contacts the 5S and 23S rRNAs.

Functionally, this is one of the proteins that bind and probably mediate the attachment of the 5S RNA into the large ribosomal subunit, where it forms part of the central protuberance. The sequence is that of Large ribosomal subunit protein uL18 from Blochmanniella pennsylvanica (strain BPEN).